The primary structure comprises 273 residues: XIAP-associated factor 1 (273 aa).

The TRAF-type zinc finger occupies 22–80; that stretch reads LHEAHCLRFIVLCPECEEPIPESKMKEHMEVVHQQTKESQQHPAKCKFCELAVQLSNLD. Residues 181–228 are disordered; it reads GNRRSTVSKDVRPKTKNRNSSTKRETKKQNGTVALPLKSGLQQRADLP.

Interacts with BIRC1, BIRC2, BIRC3, BIRC4, BIRC7 and BIRC8. Part of an complex consisting of BIRC4, XAF1 and BIRC5; the complex formation requires IFN-beta stimulation. Interacts with RNF114, the interaction increases XAF1 stability and proapoptotic effects, and may regulate IFN signaling.

The protein resides in the cytoplasm. Its subcellular location is the nucleus. The protein localises to the mitochondrion. In terms of biological role, seems to function as a negative regulator of members of the IAP (inhibitor of apoptosis protein) family. Inhibits anti-caspase activity of BIRC4. Induces cleavage and inactivation of BIRC4 independent of caspase activation. Mediates TNF-alpha-induced apoptosis and is involved in apoptosis in trophoblast cells. May inhibit BIRC4 indirectly by activating the mitochondrial apoptosis pathway. After translocation to mitochondria, promotes translocation of BAX to mitochondria and cytochrome c release from mitochondria. Seems to promote the redistribution of BIRC4 from the cytoplasm to the nucleus, probably independent of BIRC4 inactivation which seems to occur in the cytoplasm. The BIRC4-XAF1 complex mediates down-regulation of BIRC5/survivin; the process requires the E3 ligase activity of BIRC4. Seems to be involved in cellular sensitivity to the proapoptotic actions of TRAIL. May be a tumor suppressor by mediating apoptosis resistance of cancer cells. This is XIAP-associated factor 1 (Xaf1) from Mus musculus (Mouse).